The following is a 348-amino-acid chain: Phospho-2-dehydro-3-deoxyheptonate aldolase, Trp-sensitive (348 aa).

This sequence belongs to the class-I DAHP synthase family.

The enzyme catalyses D-erythrose 4-phosphate + phosphoenolpyruvate + H2O = 7-phospho-2-dehydro-3-deoxy-D-arabino-heptonate + phosphate. It functions in the pathway metabolic intermediate biosynthesis; chorismate biosynthesis; chorismate from D-erythrose 4-phosphate and phosphoenolpyruvate: step 1/7. Its function is as follows. Stereospecific condensation of phosphoenolpyruvate (PEP) and D-erythrose-4-phosphate (E4P) giving rise to 3-deoxy-D-arabino-heptulosonate-7-phosphate (DAHP). This Buchnera aphidicola subsp. Acyrthosiphon pisum (strain APS) (Acyrthosiphon pisum symbiotic bacterium) protein is Phospho-2-dehydro-3-deoxyheptonate aldolase, Trp-sensitive (aroH).